A 122-amino-acid polypeptide reads, in one-letter code: Acidic phospholipase A2 (122 aa).

Intrachain disulfides connect Cys26–Cys115, Cys28–Cys44, Cys43–Cys95, Cys49–Cys122, Cys50–Cys88, Cys57–Cys81, and Cys75–Cys86. Tyr27, Gly29, and Gly31 together coordinate Ca(2+). Residue His47 is part of the active site. Asp48 is a binding site for Ca(2+). Asp89 is a catalytic residue.

Belongs to the phospholipase A2 family. Group II subfamily. D49 sub-subfamily. Requires Ca(2+) as cofactor. In terms of processing, contains 7 disulfide bonds. As to expression, expressed by the venom gland.

Its subcellular location is the secreted. It carries out the reaction a 1,2-diacyl-sn-glycero-3-phosphocholine + H2O = a 1-acyl-sn-glycero-3-phosphocholine + a fatty acid + H(+). Its function is as follows. Snake venom phospholipase A2 (PLA2) that displays low systemic toxicity and causes severe symptoms only at very high concentrations (15 mg/kg). Has neither coagulant nor anticoagulant activity. PLA2 catalyzes the calcium-dependent hydrolysis of the 2-acyl groups in 3-sn-phosphoglycerides. The chain is Acidic phospholipase A2 from Bothrops ammodytoides (Yararanata).